A 1036-amino-acid polypeptide reads, in one-letter code: Lethal(2) giant larvae protein homolog 1 (1036 aa).

WD repeat units follow at residues 38-71 (SALA…FTGL), 78-119 (VTQM…GLSF), 139-175 (VTVV…GQTL), 199-233 (SLQG…EHVF), 239-271 (LESL…GSPP), 289-331 (AINK…ETLV), 339-373 (VIDF…VLDL), 395-473 (TCSA…YKLS), 517-592 (QKVA…RVLI), and 601-662 (TAVA…LRQS). Residue serine 662 is modified to Phosphoserine. Residues 670 to 694 (RVSGKKRATTASSKLQEANAQLAEQ) are disordered. A compositionally biased stretch (polar residues) spans 678–693 (TTASSKLQEANAQLAE). WD repeat units lie at residues 722-782 (VRCL…KEVQ), 791-843 (AIAV…VSAK), 848-901 (LTAH…VHYS), and 915-938 (VFTR…SLSA). Threonine 957 is modified (phosphothreonine). A phosphoserine mark is found at serine 964, serine 982, and serine 989. Positions 980–1002 (PESCEGSPSSAHSKRADTMEPPE) are disordered.

It belongs to the WD repeat L(2)GL family. As to quaternary structure, associated with nonmuscle myosin II heavy chain. Interacts with PRKCI/aPKC, PARD6B/Par-6 and PARD6A. Interacts with STX4A. Interacts with DCAF1. Interacts with RAB10 (GDP-bound form); the interaction is direct and promotes RAB10 association with membranes and activation through competition with the Rab inhibitor GDI1. Post-translationally, phosphorylated by PRKCI. In terms of tissue distribution, expressed at high level in the testis and at lower level in ovary, brain, spleen and kidney.

It is found in the early endosome membrane. It localises to the golgi apparatus. Its subcellular location is the trans-Golgi network membrane. The protein resides in the golgi apparatus membrane. The protein localises to the cell projection. It is found in the axon. It localises to the cytoplasm. Its subcellular location is the cytoskeleton. Its function is as follows. Cortical cytoskeleton protein found in a complex involved in maintaining cell polarity and epithelial integrity. Involved in the regulation of mitotic spindle orientation, proliferation, differentiation and tissue organization of neuroepithelial cells. Involved in axonogenesis through RAB10 activation thereby regulating vesicular membrane trafficking toward the axonal plasma membrane. This chain is Lethal(2) giant larvae protein homolog 1 (Llgl1), found in Rattus norvegicus (Rat).